The sequence spans 150 residues: Large ribosomal subunit protein bL9 (150 aa).

The protein belongs to the bacterial ribosomal protein bL9 family.

Functionally, binds to the 23S rRNA. The chain is Large ribosomal subunit protein bL9 from Shewanella woodyi (strain ATCC 51908 / MS32).